The primary structure comprises 145 residues: UPF0201 protein Saci_1285 (145 aa).

It belongs to the UPF0201 family.

The sequence is that of UPF0201 protein Saci_1285 from Sulfolobus acidocaldarius (strain ATCC 33909 / DSM 639 / JCM 8929 / NBRC 15157 / NCIMB 11770).